The chain runs to 237 residues: Ubiquinone biosynthesis O-methyltransferase (237 aa).

S-adenosyl-L-methionine-binding residues include Arg-38, Gly-58, Asp-79, and Met-124.

Belongs to the methyltransferase superfamily. UbiG/COQ3 family.

The catalysed reaction is a 3-demethylubiquinol + S-adenosyl-L-methionine = a ubiquinol + S-adenosyl-L-homocysteine + H(+). The enzyme catalyses a 3-(all-trans-polyprenyl)benzene-1,2-diol + S-adenosyl-L-methionine = a 2-methoxy-6-(all-trans-polyprenyl)phenol + S-adenosyl-L-homocysteine + H(+). It functions in the pathway cofactor biosynthesis; ubiquinone biosynthesis. Its function is as follows. O-methyltransferase that catalyzes the 2 O-methylation steps in the ubiquinone biosynthetic pathway. This Acinetobacter baumannii (strain SDF) protein is Ubiquinone biosynthesis O-methyltransferase.